We begin with the raw amino-acid sequence, 340 residues long: DNA-directed RNA polymerase subunit alpha (340 aa).

The segment at Met-1 to Lys-233 is alpha N-terminal domain (alpha-NTD). An alpha C-terminal domain (alpha-CTD) region spans residues Arg-263–Asp-340.

This sequence belongs to the RNA polymerase alpha chain family. In terms of assembly, in plastids the minimal PEP RNA polymerase catalytic core is composed of four subunits: alpha, beta, beta', and beta''. When a (nuclear-encoded) sigma factor is associated with the core the holoenzyme is formed, which can initiate transcription.

It is found in the plastid. The protein localises to the chloroplast. It catalyses the reaction RNA(n) + a ribonucleoside 5'-triphosphate = RNA(n+1) + diphosphate. In terms of biological role, DNA-dependent RNA polymerase catalyzes the transcription of DNA into RNA using the four ribonucleoside triphosphates as substrates. The polypeptide is DNA-directed RNA polymerase subunit alpha (rpoA) (Anthoceros angustus (Hornwort)).